The sequence spans 491 residues: Glutamate--tRNA ligase (491 aa).

A 'HIGH' region motif is present at residues 9-19; that stretch reads PSPTGTPHVGL. Positions 253–257 match the 'KMSKS' region motif; sequence KLSKR. K256 is a binding site for ATP.

It belongs to the class-I aminoacyl-tRNA synthetase family. Glutamate--tRNA ligase type 1 subfamily. In terms of assembly, monomer.

It localises to the cytoplasm. The catalysed reaction is tRNA(Glu) + L-glutamate + ATP = L-glutamyl-tRNA(Glu) + AMP + diphosphate. In terms of biological role, catalyzes the attachment of glutamate to tRNA(Glu) in a two-step reaction: glutamate is first activated by ATP to form Glu-AMP and then transferred to the acceptor end of tRNA(Glu). The protein is Glutamate--tRNA ligase of Mycolicibacterium gilvum (strain PYR-GCK) (Mycobacterium gilvum (strain PYR-GCK)).